The following is a 508-amino-acid chain: Probable zinc metalloprotease MCYG_04217 (508 aa).

N-linked (GlcNAc...) asparagine glycosylation occurs at Asn-111. Zn(2+) is bound by residues His-182, Asp-202, and Glu-238. N-linked (GlcNAc...) asparagine glycosylation is present at Asn-253. A Zn(2+)-binding site is contributed by Asp-265. The Fibronectin type-III domain maps to 422 to 508 (MPRNVRVDTS…ERGVAVLPFP (87 aa)). A glycan (N-linked (GlcNAc...) asparagine) is linked at Asn-435.

Belongs to the peptidase M28 family. M28B subfamily. The cofactor is Zn(2+).

The protein localises to the secreted. In Arthroderma otae (strain ATCC MYA-4605 / CBS 113480) (Microsporum canis), this protein is Probable zinc metalloprotease MCYG_04217.